We begin with the raw amino-acid sequence, 415 residues long: BTB/POZ and MATH domain-containing protein 6 (415 aa).

Residues 1–33 (MSKLMTRTSGSSSPNTIPDQIESPTSSRSVTQT) form a disordered region. Residues 35–169 (NGSHQFVIQG…DDCLKINCTV (135 aa)) enclose the MATH domain. Residues 205 to 271 (SDVTFDVAGE…MYKDSLPGDV (67 aa)) form the BTB domain. Residues 385–415 (SSSGGGKSQSVWAQLSNGGETSSRRVRQRTT) form a disordered region. Positions 392–405 (SQSVWAQLSNGGET) are enriched in polar residues.

It belongs to the Tdpoz family. As to quaternary structure, heterodimer with BPM1. Interacts with RAP2-4. Interacts with CUL3A. Binds to MYB56 at the promoter of FLOWERING LOCUS T (FT). Ubiquitous.

The protein resides in the nucleus. The protein localises to the cytoplasm. It participates in protein modification; protein ubiquitination. Its function is as follows. May act as a substrate-specific adapter of an E3 ubiquitin-protein ligase complex (CUL3-RBX1-BTB) which mediates the ubiquitination and subsequent proteasomal degradation of target proteins. The polypeptide is BTB/POZ and MATH domain-containing protein 6 (BPM6) (Arabidopsis thaliana (Mouse-ear cress)).